The primary structure comprises 1393 residues: DNA-directed RNA polymerase subunit beta'' (1393 aa).

The Zn(2+) site is built by C220, C291, C298, and C301.

The protein belongs to the RNA polymerase beta' chain family. RpoC2 subfamily. In terms of assembly, in plastids the minimal PEP RNA polymerase catalytic core is composed of four subunits: alpha, beta, beta', and beta''. When a (nuclear-encoded) sigma factor is associated with the core the holoenzyme is formed, which can initiate transcription. It depends on Zn(2+) as a cofactor.

Its subcellular location is the plastid. The protein localises to the chloroplast. The enzyme catalyses RNA(n) + a ribonucleoside 5'-triphosphate = RNA(n+1) + diphosphate. In terms of biological role, DNA-dependent RNA polymerase catalyzes the transcription of DNA into RNA using the four ribonucleoside triphosphates as substrates. The protein is DNA-directed RNA polymerase subunit beta'' of Gossypium hirsutum (Upland cotton).